Here is a 780-residue protein sequence, read N- to C-terminus: ERMVNLTLEMIYLLTGEHYIPRKKSDDGGALHAPGSVIQKENNKNDKKILELMSNIIQLLTGEVAIRTGHVSIYFSLDEWDYIKGNKDLYEEGIKEEPQQPLPPDCEYEDKSDITADLGGTLYNYNEPSKIRAEGGDFCANGNPTNPEISPMKQPPPANGIKEEVASCDGGRQSDCSINPLTEQIQGTDIPTPIMGYNHLIIQAIKDNENTSPHESRFDRHHTTHTTEKQFSHHINLHNDLSIHAGKKPFPCSECGKCFAGSSELNVHRRTHTRVKPFSCSQCGKCFSNQTKLKYHHRTHTGEKPFSCSECGKCFSTPHVRARHQKTHTGEKPFPCSECGKCFARSSDVTVHRRTHTGEKPYSCSQCGKCFTRSSDLNVHRRTHTGEKPYSCSHCGKCFTTSSELNVHRRTHTGEKPYSCSECGKSFPTSSEFTSHWKTHMEEKPFSCVQCGKCFSKDTHLKYHYRTHTGEKPFSCFECGKCFTHNGSLKVHLKIHKREADFCSKGNLTNPEISPVEHYPPTNEIKEEATSWEEGNQSDYSINSLTEQIQGPYTPTPIMEYNHLIMQDNKYDVNACHSPLQETDVTKHALHKRDIDRRQRTQTQLKYDHRTNTGDKPLSCSECGKCFSTYHVLARHQKTHTGEKPFSCSECEKCYARSSDLNVHRRTHTGEKPYSCSECGKCFTRSSDFNVHRRTHTGEKPYSCSECGRCFPTSSVLTSHWRTHTGEKPFSCTECGKCFSRETYLKYHHRTHTGEKPFSCSECGKCFTCNSSLKVHFQLH.

C2H2-type zinc fingers lie at residues 250–272 (FPCS…RRTH), 278–300 (FSCS…HRTH), 306–328 (FSCS…QKTH), 334–356 (FPCS…RRTH), 362–384 (YSCS…RRTH), 390–412 (YSCS…RRTH), 418–440 (YSCS…WKTH), 446–468 (FSCV…YRTH), 474–496 (FSCF…LKIH), 618–640 (LSCS…QKTH), 646–668 (FSCS…RRTH), 674–696 (YSCS…RRTH), 702–724 (YSCS…WRTH), 730–752 (FSCT…HRTH), and 758–780 (FSCS…FQLH).

It belongs to the krueppel C2H2-type zinc-finger protein family.

It is found in the nucleus. Its function is as follows. May be involved in transcriptional regulation. In Xenopus laevis (African clawed frog), this protein is Oocyte zinc finger protein XlCOF8.4.